The primary structure comprises 303 residues: MEIVELKDDNQEYFLDALLGKEIEKTDFSITEKENFKQNKFKELRNVFSRDNILKFGLMTGEVQIPIEQTDGSVFLATINKEQITKRISKIEEKQRRLIRYVHISTLQVLIKSTFLKGLDTPLELTLRDNRLLNLEESKIAVGHGNLKYGKMKFDVNLQLGLSLKDLDLDRSIILNYKFLRRNFMKEGNHAFSISYRINYALSNSHHSVEFKQKEKIYIDELFSEVLELKHPVFSKLTKSQSLRIEPSPVFEKPLISFKENQKTEEKTVFKPPKRDFELTETSKLKSMISDLTQKVVNLDKKI.

Positions proline 272–lysine 302 form a coiled coil.

The protein belongs to the caulimoviridae movement protein family. As to quaternary structure, homotrimer, through the coiled-coil domain. Interacts with VAP.

The protein localises to the host cell junction. It localises to the host plasmodesma. Transports viral genome to neighboring plant cells directly through plasmosdesmata, without any budding. The movement protein allows efficient cell to cell propagation, by bypassing the host cell wall barrier. Acts by forming tubules structures that increase the size exclusion limit (SEL) of plasmodesmata, thereby allowing viral ribonucleocapsids to spread directly to neighboring cells. The protein is Movement protein of Soybean chlorotic mottle virus.